Reading from the N-terminus, the 208-residue chain is Peptidyl-prolyl cis-trans isomerase FKBP13, chloroplastic (208 aa).

2 disulfides stabilise this stretch: cysteine 84-cysteine 96 and cysteine 185-cysteine 190. Positions 109–208 (GQLIKAHYVG…LFDIEYIGKA (100 aa)) constitute a PPIase FKBP-type domain.

This sequence belongs to the FKBP-type PPIase family. In terms of assembly, interacts in vitro with LTO1. The precursor, but not the mature form of the protein, interacts with the Rieske protein. In terms of tissue distribution, expressed in stems, leaves and developing flower buds, but not in roots.

Its subcellular location is the plastid. It localises to the chloroplast thylakoid lumen. The enzyme catalyses [protein]-peptidylproline (omega=180) = [protein]-peptidylproline (omega=0). Its activity is regulated as follows. PPIase activity is optimal in oxidized form (S-S) and minimal in reduced form (SH). Reduction of the oxidized form is mediated by thioredoxin (TRX-M). Its function is as follows. PPIases accelerate the folding of proteins. It catalyzes the cis-trans isomerization of proline imidic peptide bonds in oligopeptides. Responsive of the major PPIase activity in the chloroplast thylakoid lumen. Regulates the accumulation of Rieske protein, an essential component of the photosynthetic electron transport chain. The chain is Peptidyl-prolyl cis-trans isomerase FKBP13, chloroplastic from Arabidopsis thaliana (Mouse-ear cress).